Reading from the N-terminus, the 282-residue chain is Globin-related protein glb-13 (282 aa).

A disordered region spans residues 1-46 (MGQENSKCPHQSLAEKRYKVERPKTKKVSSGSATERCLSTQSDEKN). Residues 13 to 23 (LAEKRYKVERP) show a composition bias toward basic and acidic residues. A compositionally biased stretch (polar residues) spans 28–41 (VSSGSATERCLSTQ). In terms of domain architecture, Globin spans 100–249 (FLTRRERILL…IISFMRRGFD (150 aa)). Positions 162 and 194 each coordinate heme b.

The protein belongs to the globin family.

Involved in oxidative stress resistance. The protein is Globin-related protein glb-13 of Caenorhabditis elegans.